Here is a 492-residue protein sequence, read N- to C-terminus: Bifunctional protein GlmU (492 aa).

A pyrophosphorylase region spans residues 1–241 (MTFRGDTAVL…NALVAGVNNR (241 aa)). UDP-N-acetyl-alpha-D-glucosamine contacts are provided by residues 12–15 (LAAG), K26, Q83, 88–89 (GT), 112–114 (SGD), G151, E166, N181, and N239. Residue D114 participates in Mg(2+) binding. N239 contributes to the Mg(2+) binding site. The linker stretch occupies residues 242–262 (VQLAELSAELNRRIVATHQVA). The N-acetyltransferase stretch occupies residues 263-492 (GVTIIDPATT…KQSQQKSEPD (230 aa)). Residues R344 and K362 each coordinate UDP-N-acetyl-alpha-D-glucosamine. Residue H374 is the Proton acceptor of the active site. UDP-N-acetyl-alpha-D-glucosamine contacts are provided by Y377 and N388. Residues A391, 397–398 (NY), S416, and A434 each bind acetyl-CoA. Positions 461–492 (VQRKRPGSAAAQAAEKASTRTGKQSQQKSEPD) are disordered. Polar residues predominate over residues 479–492 (TRTGKQSQQKSEPD).

This sequence in the N-terminal section; belongs to the N-acetylglucosamine-1-phosphate uridyltransferase family. In the C-terminal section; belongs to the transferase hexapeptide repeat family. Homotrimer. Mg(2+) is required as a cofactor.

It is found in the cytoplasm. The catalysed reaction is alpha-D-glucosamine 1-phosphate + acetyl-CoA = N-acetyl-alpha-D-glucosamine 1-phosphate + CoA + H(+). It catalyses the reaction N-acetyl-alpha-D-glucosamine 1-phosphate + UTP + H(+) = UDP-N-acetyl-alpha-D-glucosamine + diphosphate. It functions in the pathway nucleotide-sugar biosynthesis; UDP-N-acetyl-alpha-D-glucosamine biosynthesis; N-acetyl-alpha-D-glucosamine 1-phosphate from alpha-D-glucosamine 6-phosphate (route II): step 2/2. Its pathway is nucleotide-sugar biosynthesis; UDP-N-acetyl-alpha-D-glucosamine biosynthesis; UDP-N-acetyl-alpha-D-glucosamine from N-acetyl-alpha-D-glucosamine 1-phosphate: step 1/1. It participates in bacterial outer membrane biogenesis; LPS lipid A biosynthesis. Functionally, catalyzes the last two sequential reactions in the de novo biosynthetic pathway for UDP-N-acetylglucosamine (UDP-GlcNAc). The C-terminal domain catalyzes the transfer of acetyl group from acetyl coenzyme A to glucosamine-1-phosphate (GlcN-1-P) to produce N-acetylglucosamine-1-phosphate (GlcNAc-1-P), which is converted into UDP-GlcNAc by the transfer of uridine 5-monophosphate (from uridine 5-triphosphate), a reaction catalyzed by the N-terminal domain. The chain is Bifunctional protein GlmU from Mycobacterium leprae (strain Br4923).